An 899-amino-acid polypeptide reads, in one-letter code: Probable dipeptidyl-aminopeptidase B (899 aa).

2 disordered regions span residues 1-37 (MARKDKDNGPEFVPLTNRSHRSSASFSSTDSLSSDGS) and 51-84 (KITRTQLPEENPYRDDDVELERGDNIFSRPTENS). The Cytoplasmic segment spans residues 1–91 (MARKDKDNGP…ENSKRNRGSR (91 aa)). Low complexity predominate over residues 22 to 37 (SSASFSSTDSLSSDGS). Residues 61–74 (NPYRDDDVELERGD) are compositionally biased toward basic and acidic residues. A helical; Signal-anchor for type II membrane protein membrane pass occupies residues 92–112 (LIWVVGLLCLGGWILAFVLFW). The Vacuolar portion of the chain corresponds to 113–899 (GRRNSELSSS…QQGNSVLPVT (787 aa)). Residues N149, N194, N347, N409, N513, N638, and N643 are each glycosylated (N-linked (GlcNAc...) asparagine). The active-site Charge relay system is S752. N811 carries N-linked (GlcNAc...) asparagine glycosylation. Catalysis depends on charge relay system residues D829 and H862.

The protein belongs to the peptidase S9B family.

The protein resides in the vacuole membrane. It catalyses the reaction Release of an N-terminal dipeptide, Xaa-Yaa-|-Zaa-, from a polypeptide, preferentially when Yaa is Pro, provided Zaa is neither Pro nor hydroxyproline.. In terms of biological role, type IV dipeptidyl-peptidase which removes N-terminal dipeptides sequentially from polypeptides having unsubstituted N-termini provided that the penultimate residue is proline. The polypeptide is Probable dipeptidyl-aminopeptidase B (dapB) (Talaromyces marneffei (strain ATCC 18224 / CBS 334.59 / QM 7333) (Penicillium marneffei)).